We begin with the raw amino-acid sequence, 164 residues long: Interleukin-10 (164 aa).

A signal peptide spans 1-18 (MPSSALLCCLIFLARVAA). 2 disulfides stabilise this stretch: Cys-30-Cys-126 and Cys-80-Cys-132. Asn-134 carries an N-linked (GlcNAc...) asparagine glycan.

This sequence belongs to the IL-10 family. As to quaternary structure, homodimer. Interacts with IL10RA and IL10RB.

Its subcellular location is the secreted. Its function is as follows. Major immune regulatory cytokine that acts on many cells of the immune system where it has profound anti-inflammatory functions, limiting excessive tissue disruption caused by inflammation. Mechanistically, IL10 binds to its heterotetrameric receptor comprising IL10RA and IL10RB leading to JAK1 and STAT2-mediated phosphorylation of STAT3. In turn, STAT3 translocates to the nucleus where it drives expression of anti-inflammatory mediators. Targets antigen-presenting cells (APCs) such as macrophages and monocytes and inhibits their release of pro-inflammatory cytokines including granulocyte-macrophage colony-stimulating factor /GM-CSF, granulocyte colony-stimulating factor/G-CSF, IL-1 alpha, IL-1 beta, IL-6, IL-8 and TNF-alpha. Also interferes with antigen presentation by reducing the expression of MHC-class II and co-stimulatory molecules, thereby inhibiting their ability to induce T cell activation. In addition, controls the inflammatory response of macrophages by reprogramming essential metabolic pathways including mTOR signaling. In Orcinus orca (Killer whale), this protein is Interleukin-10 (IL10).